A 502-amino-acid polypeptide reads, in one-letter code: Cardiolipin synthase (502 aa).

3 consecutive transmembrane segments (helical) span residues 7 to 27, 29 to 49, and 59 to 79; these read VAIL…YWGG, LLGI…FVIS, and IAWL…YLLF. PLD phosphodiesterase domains are found at residues 237 to 264 and 415 to 442; these read INFR…GDEY and EKGF…DMRS. Catalysis depends on residues His242, Lys244, Asp249, His420, Lys422, and Asp427.

The protein belongs to the phospholipase D family. Cardiolipin synthase subfamily.

It is found in the cell membrane. It catalyses the reaction 2 a 1,2-diacyl-sn-glycero-3-phospho-(1'-sn-glycerol) = a cardiolipin + glycerol. Catalyzes the reversible phosphatidyl group transfer from one phosphatidylglycerol molecule to another to form cardiolipin (CL) (diphosphatidylglycerol) and glycerol. The polypeptide is Cardiolipin synthase (cls) (Geobacillus thermodenitrificans (strain NG80-2)).